The sequence spans 460 residues: GTPase Der (460 aa).

EngA-type G domains follow at residues 2-164 and 196-368; these read QSII…HEEF and IRVG…ENFT. Residues 8-15, 55-59, 116-119, 202-209, 249-253, and 313-316 each bind GTP; these read GKPNVGKS, DSGGL, NKVD, GRVNVGKS, DTAGI, and NKWD. In terms of domain architecture, KH-like spans 369 to 453; that stretch reads QKIQTSKLNT…PLVIASRKKG (85 aa).

Belongs to the TRAFAC class TrmE-Era-EngA-EngB-Septin-like GTPase superfamily. EngA (Der) GTPase family. Associates with the 50S ribosomal subunit.

GTPase that plays an essential role in the late steps of ribosome biogenesis. The sequence is that of GTPase Der from Campylobacter jejuni subsp. jejuni serotype O:23/36 (strain 81-176).